A 309-amino-acid chain; its full sequence is Porphobilinogen deaminase (309 aa).

Cys242 is modified (S-(dipyrrolylmethanemethyl)cysteine).

This sequence belongs to the HMBS family. As to quaternary structure, monomer. Dipyrromethane is required as a cofactor.

The enzyme catalyses 4 porphobilinogen + H2O = hydroxymethylbilane + 4 NH4(+). It functions in the pathway porphyrin-containing compound metabolism; protoporphyrin-IX biosynthesis; coproporphyrinogen-III from 5-aminolevulinate: step 2/4. Tetrapolymerization of the monopyrrole PBG into the hydroxymethylbilane pre-uroporphyrinogen in several discrete steps. This is Porphobilinogen deaminase from Hamiltonella defensa subsp. Acyrthosiphon pisum (strain 5AT).